We begin with the raw amino-acid sequence, 115 residues long: UPF0597 protein HI_0855 (115 aa).

Belongs to the UPF0597 family.

The polypeptide is UPF0597 protein HI_0855 (Haemophilus influenzae (strain ATCC 51907 / DSM 11121 / KW20 / Rd)).